Reading from the N-terminus, the 342-residue chain is Holliday junction branch migration complex subunit RuvB (342 aa).

The tract at residues 1–181 (MENRMVTPFD…FGMLCAMEFY (181 aa)) is large ATPase domain (RuvB-L). ATP is bound by residues Leu-20, Arg-21, Gly-62, Lys-65, Thr-66, Thr-67, 128–130 (EDY), Arg-171, Tyr-181, and Arg-218. Thr-66 is a Mg(2+) binding site. Positions 182–252 (TDEELMEIVV…GAKAALDLLE (71 aa)) are small ATPAse domain (RuvB-S). Positions 255–342 (KEGLDKIDNK…KDNQVSIFNK (88 aa)) are head domain (RuvB-H). Residues Arg-310 and Arg-315 each coordinate DNA.

This sequence belongs to the RuvB family. As to quaternary structure, homohexamer. Forms an RuvA(8)-RuvB(12)-Holliday junction (HJ) complex. HJ DNA is sandwiched between 2 RuvA tetramers; dsDNA enters through RuvA and exits via RuvB. An RuvB hexamer assembles on each DNA strand where it exits the tetramer. Each RuvB hexamer is contacted by two RuvA subunits (via domain III) on 2 adjacent RuvB subunits; this complex drives branch migration. In the full resolvosome a probable DNA-RuvA(4)-RuvB(12)-RuvC(2) complex forms which resolves the HJ.

The protein localises to the cytoplasm. The enzyme catalyses ATP + H2O = ADP + phosphate + H(+). Functionally, the RuvA-RuvB-RuvC complex processes Holliday junction (HJ) DNA during genetic recombination and DNA repair, while the RuvA-RuvB complex plays an important role in the rescue of blocked DNA replication forks via replication fork reversal (RFR). RuvA specifically binds to HJ cruciform DNA, conferring on it an open structure. The RuvB hexamer acts as an ATP-dependent pump, pulling dsDNA into and through the RuvAB complex. RuvB forms 2 homohexamers on either side of HJ DNA bound by 1 or 2 RuvA tetramers; 4 subunits per hexamer contact DNA at a time. Coordinated motions by a converter formed by DNA-disengaged RuvB subunits stimulates ATP hydrolysis and nucleotide exchange. Immobilization of the converter enables RuvB to convert the ATP-contained energy into a lever motion, pulling 2 nucleotides of DNA out of the RuvA tetramer per ATP hydrolyzed, thus driving DNA branch migration. The RuvB motors rotate together with the DNA substrate, which together with the progressing nucleotide cycle form the mechanistic basis for DNA recombination by continuous HJ branch migration. Branch migration allows RuvC to scan DNA until it finds its consensus sequence, where it cleaves and resolves cruciform DNA. In Clostridium botulinum (strain Loch Maree / Type A3), this protein is Holliday junction branch migration complex subunit RuvB.